Here is a 450-residue protein sequence, read N- to C-terminus: MSELSVATGAVSTASSSIPMPAGVNPADLAAELAAVVTESVDEDYLLYECDGQWVLAAGVQAMVELDSDELRVIRDGVTRRQQWSGRPGAALGEAVDRLLLETDQAFGWVAFEFGVHRYGLQQRLAPHTPLARVFSPRTRIMVSEKEIRLFDAGIRHREAIDRLLATGVREVPQSRSVDVSDDPSGFRRRVAVAVDEIAAGRYHKVILSRCVEVPFAIDFPLTYRLGRRHNTPVRSFLLQLGGIRALGYSPELVTAVRADGVVITEPLAGTRALGRGPAIDRLARDDLESNSKEIVEHAISVRSSLEEITDIAEPGSAAVIDFMTVRERGSVQHLGSTIRARLDPSSDRMAALEALFPAVTASGIPKAAGVEAIFRLDECPRGLYSGAVVMLSADGGLDAALTLRAAYQVGGRTWLRAGAGIIEESEPEREFEETCEKLSTLTPYLVARQ.

Glutamate 252 (proton donor) is an active-site residue. Residue 270–271 (GT) coordinates substrate. Glutamate 297 is a Mg(2+) binding site. Residues tyrosine 385, arginine 405, and 419 to 421 (GAG) each bind substrate. 2 residues coordinate Mg(2+): glutamate 431 and glutamate 434. Lysine 438 contributes to the substrate binding site.

Belongs to the anthranilate synthase component I family. Salicylate synthase subfamily. As to quaternary structure, monomer. The cofactor is Mg(2+).

The enzyme catalyses chorismate = isochorismate. It carries out the reaction isochorismate = salicylate + pyruvate. The catalysed reaction is chorismate = prephenate. The protein operates within siderophore biosynthesis; mycobactin biosynthesis. Its function is as follows. Involved in the incorporation of salicylate into the virulence-conferring salicylate-based siderophore mycobactin. Catalyzes the initial conversion of chorismate to yield the intermediate isochorismate (isochorismate synthase activity), and the subsequent elimination of the enolpyruvyl side chain in a lyase reaction to give salicylate (isochorismate pyruvate-lyase activity). In the absence of magnesium, MbtI displays a chorismate mutase activity and converts chorismate to prephenate. This is Salicylate synthase (mbtI) from Mycobacterium bovis (strain ATCC BAA-935 / AF2122/97).